The primary structure comprises 72 residues: Disintegrin cereberin (72 aa).

The Disintegrin domain maps to 1–72 (EAGEECDCGS…SADCPRNRFH (72 aa)). Disulfide bonds link cysteine 6/cysteine 21, cysteine 8/cysteine 16, cysteine 15/cysteine 38, cysteine 29/cysteine 35, cysteine 34/cysteine 59, and cysteine 47/cysteine 66. The short motif at 51–53 (RGD) is the Cell attachment site element. Positions 51–72 (RGDNPDDRCTGQSADCPRNRFH) are disordered.

This sequence belongs to the venom metalloproteinase (M12B) family. P-II subfamily. P-IIa sub-subfamily. In terms of assembly, monomer (disintegrin). Expressed by the venom gland.

The protein resides in the secreted. In terms of biological role, inhibits fibrinogen interaction with platelet. Acts by binding to alpha-IIb/beta-3 (ITGA2B/ITGB3) on the platelet surface and inhibits aggregation induced by ADP, thrombin, platelet-activating factor and collagen. This chain is Disintegrin cereberin, found in Crotalus cerberus (Arizona black rattlesnake).